Consider the following 271-residue polypeptide: Aquaporin-11 (271 aa).

The Cytoplasmic portion of the chain corresponds to 1-14 (MSALLGLRPEVQDT). A helical membrane pass occupies residues 15–35 (CISLGLMLLFVLFVGLARVIA). Residues 36–41 (RQQLHR) are Lumenal-facing. The chain crosses the membrane as a helical span at residues 42–62 (PVVHAFVLEFLATFQLCCCTH). The Cytoplasmic portion of the chain corresponds to 63–76 (ELQVLSEQDSAHPT). A helical transmembrane segment spans residues 77–97 (WTLTLIYFFSLVHGLTLVGTA). Residues 98-166 (SNPCGVMMQM…NPIHTDMSKA (69 aa)) lie on the Lumenal side of the membrane. The NPC signature appears at 99–101 (NPC). The chain crosses the membrane as a helical span at residues 167 to 187 (IIIEAICSFIFHSALLHFQEV). The Cytoplasmic segment spans residues 188 to 194 (RTKLRIH). Residues 195 to 215 (LLAALITFLAYAGGSLTGALF) traverse the membrane as a helical segment. The NPA motif lies at 216-218 (NPA). Over 216 to 234 (NPALALSLHFPCFDELFYK) the chain is Lumenal. The helical transmembrane segment at 235-255 (FFVVYWLAPSVGVLMMILMFS) threads the bilayer. The Cytoplasmic portion of the chain corresponds to 256–271 (FFLPWLHNNQMTNKKE).

Belongs to the MIP/aquaporin (TC 1.A.8) family. AQP11/AQP12 subfamily. As to quaternary structure, homodimer; disulfide-linked. Homotetramer. Can also form homomultimer. Post-translationally, not glycosylated. In terms of tissue distribution, highly expressed in the S1 proximal tubule segment,. Expressed in the testis, kidney, and liver. Weakly expressed in the heart, brain, and muscle. Highly expressed in the testis. Expressed in the proximal tubule of the cortex of 8-day-old mouse kidney. Expressed in retina specifically at retinal Mueller glial cells. Expressed in brain. Expressed abundantly at the choroid plexus but also expressed weakly in the parenchyma. Expressed at the capillary endothelium in the cerebral white matter. Expressed in adult testis, in the elongated spermatids (ES) and in residual bodies inside Sertoli cells.

The protein resides in the endoplasmic reticulum membrane. It is found in the cytoplasmic vesicle membrane. The protein localises to the cell membrane. It catalyses the reaction H2O(in) = H2O(out). The catalysed reaction is glycerol(in) = glycerol(out). It carries out the reaction H2O2(out) = H2O2(in). Channel protein that facilitates the transport of water, glycerol and hydrogen peroxide across membrane of cell or organelles guaranteeing intracellular homeostasis in several organes like liver, kidney and brain. In situation of stress, participates in endoplasmic reticulum (ER) homeostasis by regulating redox homeostasis through the transport of hydrogen peroxide across the endoplasmic reticulum membrane thereby regulating the oxidative stress through the NADPH oxidase 2 pathway. Plays a role by maintaining an environment suitable for translation or protein foldings in the ER lumen namely by participating in the PKD1 glycosylation processing resulting in regulation of PKD1 membrane trafficking thereby preventing the accumulation of unfolding protein in ER. Plays a role in the proximal tubule function by regulating its endosomal acidification. May play a role in postnatal kidney development. This chain is Aquaporin-11, found in Mus musculus (Mouse).